A 423-amino-acid chain; its full sequence is Kynureninase (423 aa).

Residues leucine 105, serine 106, 133–136, aspartate 218, histidine 221, and tyrosine 243 each bind pyridoxal 5'-phosphate; that span reads FPSD. Position 244 is an N6-(pyridoxal phosphate)lysine (lysine 244). 2 residues coordinate pyridoxal 5'-phosphate: tryptophan 273 and asparagine 301.

Belongs to the kynureninase family. Homodimer. It depends on pyridoxal 5'-phosphate as a cofactor.

The enzyme catalyses L-kynurenine + H2O = anthranilate + L-alanine + H(+). It catalyses the reaction 3-hydroxy-L-kynurenine + H2O = 3-hydroxyanthranilate + L-alanine + H(+). Its pathway is amino-acid degradation; L-kynurenine degradation; L-alanine and anthranilate from L-kynurenine: step 1/1. The protein operates within cofactor biosynthesis; NAD(+) biosynthesis; quinolinate from L-kynurenine: step 2/3. In terms of biological role, catalyzes the cleavage of L-kynurenine (L-Kyn) and L-3-hydroxykynurenine (L-3OHKyn) into anthranilic acid (AA) and 3-hydroxyanthranilic acid (3-OHAA), respectively. The chain is Kynureninase from Xanthomonas oryzae pv. oryzae (strain PXO99A).